The sequence spans 395 residues: Elongation factor Tu (395 aa).

Residues 10 to 204 (KPHVNIGTIG…AVDEYIPTPQ (195 aa)) enclose the tr-type G domain. Residues 19–26 (GHVDHGKT) form a G1 region. Position 19-26 (19-26 (GHVDHGKT)) interacts with GTP. Residue Thr26 participates in Mg(2+) binding. The tract at residues 60 to 64 (GITIS) is G2. The interval 81–84 (DCPG) is G3. Residues 81 to 85 (DCPGH) and 136 to 139 (NKCD) contribute to the GTP site. Positions 136–139 (NKCD) are G4. A G5 region spans residues 174–176 (SAL).

It belongs to the TRAFAC class translation factor GTPase superfamily. Classic translation factor GTPase family. EF-Tu/EF-1A subfamily. In terms of assembly, monomer.

It is found in the cytoplasm. It carries out the reaction GTP + H2O = GDP + phosphate + H(+). In terms of biological role, GTP hydrolase that promotes the GTP-dependent binding of aminoacyl-tRNA to the A-site of ribosomes during protein biosynthesis. The sequence is that of Elongation factor Tu from Geobacillus sp. (strain WCH70).